The primary structure comprises 201 residues: Thylakoid membrane protein slr1796 (201 aa).

Residues 16-36 (FLIVSLAFAMLLLGIWGTLPF) form a helical membrane-spanning segment.

The protein resides in the cellular thylakoid membrane. This is Thylakoid membrane protein slr1796 from Synechocystis sp. (strain ATCC 27184 / PCC 6803 / Kazusa).